Reading from the N-terminus, the 231-residue chain is Ubiquinone biosynthesis protein coq-4, mitochondrial (231 aa).

The Zn(2+) site is built by H133, D134, H137, and E149.

The protein belongs to the COQ4 family. Component of a multi-subunit COQ enzyme complex. Zn(2+) serves as cofactor.

It is found in the mitochondrion inner membrane. The catalysed reaction is a 4-hydroxy-3-methoxy-5-(all-trans-polyprenyl)benzoate + H(+) = a 2-methoxy-6-(all-trans-polyprenyl)phenol + CO2. The protein operates within cofactor biosynthesis; ubiquinone biosynthesis. Its function is as follows. Lyase that catalyzes the C1-decarboxylation of 4-hydroxy-3-methoxy-5-(all-trans-polyprenyl)benzoic acid into 2-methoxy-6-(all-trans-polyprenyl)phenol during ubiquinone biosynthesis. This chain is Ubiquinone biosynthesis protein coq-4, mitochondrial, found in Caenorhabditis elegans.